We begin with the raw amino-acid sequence, 359 residues long: Protein mab-21-like 2 (359 aa).

The protein belongs to the mab-21 family.

Its subcellular location is the nucleus. It is found in the cytoplasm. Required for eye morphogenesis. May promote the survival of proliferating retinal progenitor cells. In Danio rerio (Zebrafish), this protein is Protein mab-21-like 2 (mab21l2).